Here is a 503-residue protein sequence, read N- to C-terminus: Maturase K (503 aa).

The protein belongs to the intron maturase 2 family. MatK subfamily.

It localises to the plastid. The protein resides in the chloroplast. Usually encoded in the trnK tRNA gene intron. Probably assists in splicing its own and other chloroplast group II introns. The sequence is that of Maturase K from Eucalyptus globulus (Tasmanian blue gum).